Reading from the N-terminus, the 212-residue chain is Golgi-associated RAB2 interactor protein 5A (212 aa).

Disordered stretches follow at residues 1–21 (MKGG…LAPA) and 162–212 (PFTH…LWGL). Positions 169 to 185 (APEEEEEEEEEEEEEEV) are enriched in acidic residues.

Belongs to the GARIN family. In terms of assembly, interacts (via N-terminus) with RAB2B (in GTP-bound form). Expressed in testis (at protein level).

It is found in the golgi apparatus. Functionally, RAB2B effector protein which promotes cytosolic DNA-induced innate immune responses. Regulates IFN responses against DNA viruses by regulating the CGAS-STING signaling axis. This Mus musculus (Mouse) protein is Golgi-associated RAB2 interactor protein 5A.